A 433-amino-acid chain; its full sequence is Histone acetyltransferase type B subunit 2 (433 aa).

WD repeat units follow at residues 131 to 171 (EHPG…LDPT), 184 to 224 (GHEA…ADSR), 234 to 274 (HHTQ…TNKA), 281 to 321 (GHLD…EKVH), and 325 to 365 (GHND…EEQL). Positions 367–371 (DDQDD) are interaction with the histone H4 N-terminus. The stretch at 382–422 (GHTNHLADFSWNPNEPWLVASAAEDNLLQIWKVAESIVGKD) is one WD 6 repeat.

Belongs to the WD repeat RBAP46/RBAP48/MSI1 family. Component of the HAT-B complex composed of at least HAT1 and HAT2. The HAT-B complex binds to histone H4 tail.

The protein resides in the cytoplasm. The protein localises to the nucleus. Its function is as follows. Regulatory subunit of the histone acetylase B (HAT-B) complex. The complex acetylates 'Lys-12' of histone H4 which is required for telomeric silencing. The sequence is that of Histone acetyltransferase type B subunit 2 (HAT2) from Gibberella zeae (strain ATCC MYA-4620 / CBS 123657 / FGSC 9075 / NRRL 31084 / PH-1) (Wheat head blight fungus).